A 187-amino-acid chain; its full sequence is Glutathione-dependent formaldehyde-activating enzyme (187 aa).

In terms of domain architecture, CENP-V/GFA spans 20–167 (FAGGTLVCKC…LKELGLEPYD (148 aa)). Residues cysteine 27, cysteine 29, cysteine 48, cysteine 50, cysteine 53, cysteine 95, and cysteine 98 each contribute to the Zn(2+) site.

This sequence belongs to the Gfa family. Zn(2+) serves as cofactor.

The enzyme catalyses S-(hydroxymethyl)glutathione = glutathione + formaldehyde. The protein operates within one-carbon metabolism; formaldehyde degradation; formate from formaldehyde (glutathione route): step 1/3. Its function is as follows. Catalyzes the condensation of formaldehyde and glutathione to S-hydroxymethylglutathione. The sequence is that of Glutathione-dependent formaldehyde-activating enzyme from Bradyrhizobium sp. (strain BTAi1 / ATCC BAA-1182).